The following is a 270-amino-acid chain: Putative carbamate hydrolase RutD (270 aa).

It belongs to the AB hydrolase superfamily. Hydrolase RutD family.

The catalysed reaction is carbamate + 2 H(+) = NH4(+) + CO2. Functionally, involved in pyrimidine catabolism. May facilitate the hydrolysis of carbamate, a reaction that can also occur spontaneously. The protein is Putative carbamate hydrolase RutD of Escherichia coli (strain SMS-3-5 / SECEC).